A 1189-amino-acid polypeptide reads, in one-letter code: Nucleolar protein NET1 (1189 aa).

2 positions are modified to phosphoserine: serine 60 and serine 166. Disordered regions lie at residues 160–260 (SKLN…ISSG) and 345–1189 (TAQD…FKKK). The segment covering 166–180 (SPQSVQPQQQIPSSS) has biased composition (low complexity). Residues 200–210 (IRSATNGSMRV) show a composition bias toward polar residues. A phosphoserine mark is found at serine 231 and serine 252. Residues 244 to 253 (LPPPTQPQSP) show a composition bias toward pro residues. A compositionally biased stretch (basic and acidic residues) spans 368 to 381 (PEPRISEIEKELKE). The span at 391-407 (PAKAAKIPMKKPYLENG) shows a compositional bias: low complexity. Polar residues predominate over residues 432 to 450 (ASLQRSQSSIADNNGSPVK). Phosphoserine occurs at positions 437, 439, 447, and 452. Residues 470 to 486 (ASNTSITKSSNGESWGK) are compositionally biased toward polar residues. At serine 497 the chain carries Phosphoserine. A compositionally biased stretch (basic and acidic residues) spans 526-543 (NQVREKEDTNDKLLEKEI). Residues 590–601 (IEDDGNDNDEVD) show a composition bias toward acidic residues. Polar residues predominate over residues 641-657 (SRTSGNSKNSKPYTTVL). A compositionally biased stretch (basic and acidic residues) spans 659 to 668 (KDIDNSKPDP). At threonine 676 the chain carries Phosphothreonine. Residues 682 to 691 (KRAAQLLAGA) show a composition bias toward low complexity. Basic and acidic residues predominate over residues 692 to 702 (KKNEVPQKSTE). The segment covering 710–725 (TDDESESGIETDFSSD) has biased composition (acidic residues). Over residues 756–777 (KDSKIINKEVDEERNDKRDSQK) the composition is skewed to basic and acidic residues. Residues 778 to 792 (KSAVSESSVTNSKIS) are compositionally biased toward polar residues. Basic and acidic residues predominate over residues 806-815 (KQNEATKVET). The segment covering 822 to 833 (SSFPVVGGSPSV) has biased composition (low complexity). Phosphoserine is present on serine 830. Composition is skewed to basic and acidic residues over residues 884 to 897 (DLNKKAEGSKEPEK), 905 to 919 (ANDKNNSKEKEDSKS), and 945 to 954 (ANDKLKDLKA). Low complexity predominate over residues 969–999 (SNEKNNSSANDDDSSSSGSSTEDESSSSSSS). The segment covering 1023-1039 (RSSSKIEAPSPSVNKKI) has biased composition (polar residues). Threonine 1042 carries the post-translational modification Phosphothreonine. Residues 1055-1070 (SSPPSVKSKTTSNPSS) show a composition bias toward low complexity. A phosphoserine mark is found at serine 1056 and serine 1059. The span at 1095 to 1109 (PDVKEKTSKSNEKSQ) shows a compositional bias: basic and acidic residues. Composition is skewed to low complexity over residues 1123-1137 (DSDSNSSSDSVSDSS) and 1158-1169 (SFISAKSASAAL).

To yeast YKR010c. As to quaternary structure, component of the RENT complex which is composed of at least NET1, CDC14 and SIR2. Interacts with NSI1. Post-translationally, phosphorylated by CDC5.

It is found in the nucleus. The protein localises to the nucleolus. In terms of biological role, has a role in chromosome maintenance and is involved in mitotic exit. Inhibits the action of CDC14 by sequestering it in the nucleolus. Also binds to RNA polymerase I and stimulates rRNA synthesis. Influences RDNA chromatin by tethering SIR2 to rDNA in the nucleolus. The protein is Nucleolar protein NET1 (NET1) of Saccharomyces cerevisiae (strain ATCC 204508 / S288c) (Baker's yeast).